The primary structure comprises 275 residues: 2,3,4,5-tetrahydropyridine-2,6-dicarboxylate N-succinyltransferase (275 aa).

Arg-107 and Asp-144 together coordinate substrate.

Belongs to the transferase hexapeptide repeat family. Homotrimer.

The protein localises to the cytoplasm. It catalyses the reaction (S)-2,3,4,5-tetrahydrodipicolinate + succinyl-CoA + H2O = (S)-2-succinylamino-6-oxoheptanedioate + CoA. It participates in amino-acid biosynthesis; L-lysine biosynthesis via DAP pathway; LL-2,6-diaminopimelate from (S)-tetrahydrodipicolinate (succinylase route): step 1/3. The chain is 2,3,4,5-tetrahydropyridine-2,6-dicarboxylate N-succinyltransferase from Polynucleobacter asymbioticus (strain DSM 18221 / CIP 109841 / QLW-P1DMWA-1) (Polynucleobacter necessarius subsp. asymbioticus).